The chain runs to 113 residues: Putative pterin-4-alpha-carbinolamine dehydratase (113 aa).

The protein belongs to the pterin-4-alpha-carbinolamine dehydratase family.

The enzyme catalyses (4aS,6R)-4a-hydroxy-L-erythro-5,6,7,8-tetrahydrobiopterin = (6R)-L-erythro-6,7-dihydrobiopterin + H2O. The polypeptide is Putative pterin-4-alpha-carbinolamine dehydratase (Idiomarina loihiensis (strain ATCC BAA-735 / DSM 15497 / L2-TR)).